We begin with the raw amino-acid sequence, 534 residues long: CTP synthase (534 aa).

The tract at residues 1-267 (MTKYIFVTGG…DQIVCDHLKL (267 aa)) is amidoligase domain. Serine 13 contributes to the CTP binding site. Residue serine 13 coordinates UTP. 14 to 19 (SIGKGI) lines the ATP pocket. L-glutamine is bound at residue tyrosine 54. Residue aspartate 71 coordinates ATP. Residues aspartate 71 and glutamate 141 each contribute to the Mg(2+) site. Residues 148–150 (DIE), 188–193 (KTKPTQ), and lysine 224 each bind CTP. UTP is bound by residues 188 to 193 (KTKPTQ) and lysine 224. The 243-residue stretch at 292-534 (KIALVGKYVE…FVTAAVENMK (243 aa)) folds into the Glutamine amidotransferase type-1 domain. Glycine 354 serves as a coordination point for L-glutamine. Cysteine 381 functions as the Nucleophile; for glutamine hydrolysis in the catalytic mechanism. Residues 382 to 385 (LGMQ), glutamate 405, and arginine 463 contribute to the L-glutamine site. Catalysis depends on residues histidine 508 and glutamate 510.

Belongs to the CTP synthase family. As to quaternary structure, homotetramer.

It carries out the reaction UTP + L-glutamine + ATP + H2O = CTP + L-glutamate + ADP + phosphate + 2 H(+). It catalyses the reaction L-glutamine + H2O = L-glutamate + NH4(+). The catalysed reaction is UTP + NH4(+) + ATP = CTP + ADP + phosphate + 2 H(+). It functions in the pathway pyrimidine metabolism; CTP biosynthesis via de novo pathway; CTP from UDP: step 2/2. Its activity is regulated as follows. Allosterically activated by GTP, when glutamine is the substrate; GTP has no effect on the reaction when ammonia is the substrate. The allosteric effector GTP functions by stabilizing the protein conformation that binds the tetrahedral intermediate(s) formed during glutamine hydrolysis. Inhibited by the product CTP, via allosteric rather than competitive inhibition. Its function is as follows. Catalyzes the ATP-dependent amination of UTP to CTP with either L-glutamine or ammonia as the source of nitrogen. Regulates intracellular CTP levels through interactions with the four ribonucleotide triphosphates. The sequence is that of CTP synthase from Streptococcus agalactiae serotype V (strain ATCC BAA-611 / 2603 V/R).